The sequence spans 121 residues: RxLR effector protein PexRD2 (121 aa).

The N-terminal stretch at 1–18 is a signal peptide; that stretch reads MRLSYVFVVFAASLLVTA. The RxLR-dEER motif lies at 38–56; sequence RLLRKHYTAAENDGDSEAR. The segment at 57–121 is WY domain; sequence ALNPEKMKTM…LNYVAEHTAV (65 aa).

Belongs to the RxLR effector family.

It is found in the secreted. It localises to the host cytoplasm. The protein resides in the host nucleus. In terms of biological role, secreted effector involved in P.mirabilis colonization of host plants. May perturb the signaling of cell death associated with plant immunity, via interaction with a host MAP kinase. The polypeptide is RxLR effector protein PexRD2 (Phytophthora mirabilis).